The following is a 572-amino-acid chain: 2-succinyl-5-enolpyruvyl-6-hydroxy-3-cyclohexene-1-carboxylate synthase (572 aa).

This sequence belongs to the TPP enzyme family. MenD subfamily. Homodimer. Mg(2+) is required as a cofactor. Requires Mn(2+) as cofactor. Thiamine diphosphate serves as cofactor.

The enzyme catalyses isochorismate + 2-oxoglutarate + H(+) = 5-enolpyruvoyl-6-hydroxy-2-succinyl-cyclohex-3-ene-1-carboxylate + CO2. Its pathway is quinol/quinone metabolism; 1,4-dihydroxy-2-naphthoate biosynthesis; 1,4-dihydroxy-2-naphthoate from chorismate: step 2/7. It functions in the pathway quinol/quinone metabolism; menaquinone biosynthesis. In terms of biological role, catalyzes the thiamine diphosphate-dependent decarboxylation of 2-oxoglutarate and the subsequent addition of the resulting succinic semialdehyde-thiamine pyrophosphate anion to isochorismate to yield 2-succinyl-5-enolpyruvyl-6-hydroxy-3-cyclohexene-1-carboxylate (SEPHCHC). In Vibrio campbellii (strain ATCC BAA-1116), this protein is 2-succinyl-5-enolpyruvyl-6-hydroxy-3-cyclohexene-1-carboxylate synthase.